Here is a 380-residue protein sequence, read N- to C-terminus: Cytochrome b (380 aa).

4 consecutive transmembrane segments (helical) span residues 34–54 (FGSLLGICLATQILTGLLLAA), 78–99 (WLIRNLHANGASFFFICIYLHI), 114–134 (WNTGVILLLTLMATAFVGYVL), and 179–199 (FFTLHFLLPFMIMGLTLIHLT). Heme b contacts are provided by His84 and His98. Positions 183 and 197 each coordinate heme b. His202 contributes to the a ubiquinone binding site. 4 consecutive transmembrane segments (helical) span residues 227–247 (LKDILGFMLMLLPLMTLALFS), 289–309 (LGGVLALAASVLILFLAPLLH), 321–341 (LSQLLFWTLTANLLILTWVGS), and 348–368 (FMIIGQLASLTYFTILLVLFP).

It belongs to the cytochrome b family. As to quaternary structure, the cytochrome bc1 complex contains 11 subunits: 3 respiratory subunits (MT-CYB, CYC1 and UQCRFS1), 2 core proteins (UQCRC1 and UQCRC2) and 6 low-molecular weight proteins (UQCRH/QCR6, UQCRB/QCR7, UQCRQ/QCR8, UQCR10/QCR9, UQCR11/QCR10 and a cleavage product of UQCRFS1). This cytochrome bc1 complex then forms a dimer. The cofactor is heme b.

It localises to the mitochondrion inner membrane. Component of the ubiquinol-cytochrome c reductase complex (complex III or cytochrome b-c1 complex) that is part of the mitochondrial respiratory chain. The b-c1 complex mediates electron transfer from ubiquinol to cytochrome c. Contributes to the generation of a proton gradient across the mitochondrial membrane that is then used for ATP synthesis. This chain is Cytochrome b (MT-CYB), found in Anthropoides virgo (Demoiselle crane).